Here is a 128-residue protein sequence, read N- to C-terminus: Large ribosomal subunit protein bL12 (128 aa).

Belongs to the bacterial ribosomal protein bL12 family. In terms of assembly, homodimer. Part of the ribosomal stalk of the 50S ribosomal subunit. Forms a multimeric L10(L12)X complex, where L10 forms an elongated spine to which 2 to 4 L12 dimers bind in a sequential fashion. Binds GTP-bound translation factors.

Functionally, forms part of the ribosomal stalk which helps the ribosome interact with GTP-bound translation factors. Is thus essential for accurate translation. The polypeptide is Large ribosomal subunit protein bL12 (Kosmotoga olearia (strain ATCC BAA-1733 / DSM 21960 / TBF 19.5.1)).